Reading from the N-terminus, the 195-residue chain is Glycerol-3-phosphate acyltransferase (195 aa).

Helical transmembrane passes span 2–22 (INLL…SFIV), 79–99 (AALM…LLGF), 111–131 (VALI…VVIL), and 146–166 (TILP…GLVL).

This sequence belongs to the PlsY family. As to quaternary structure, probably interacts with PlsX.

Its subcellular location is the cell membrane. The enzyme catalyses an acyl phosphate + sn-glycerol 3-phosphate = a 1-acyl-sn-glycero-3-phosphate + phosphate. The protein operates within lipid metabolism; phospholipid metabolism. Functionally, catalyzes the transfer of an acyl group from acyl-phosphate (acyl-PO(4)) to glycerol-3-phosphate (G3P) to form lysophosphatidic acid (LPA). This enzyme utilizes acyl-phosphate as fatty acyl donor, but not acyl-CoA or acyl-ACP. This Alkaliphilus metalliredigens (strain QYMF) protein is Glycerol-3-phosphate acyltransferase.